Reading from the N-terminus, the 506-residue chain is Kynureninase 1 (506 aa).

Residues leucine 141, threonine 142, 169 to 172, aspartate 254, histidine 257, and tyrosine 279 contribute to the pyridoxal 5'-phosphate site; that span reads FPSD. The residue at position 280 (lysine 280) is an N6-(pyridoxal phosphate)lysine. Positions 303 to 319 are enriched in low complexity; that stretch reads ETAPTTTPDGTNGNPKT. The disordered stretch occupies residues 303–322; that stretch reads ETAPTTTPDGTNGNPKTISD. Pyridoxal 5'-phosphate contacts are provided by tryptophan 334 and asparagine 362.

This sequence belongs to the kynureninase family. In terms of assembly, homodimer. The cofactor is pyridoxal 5'-phosphate.

It is found in the cytoplasm. It catalyses the reaction L-kynurenine + H2O = anthranilate + L-alanine + H(+). The enzyme catalyses 3-hydroxy-L-kynurenine + H2O = 3-hydroxyanthranilate + L-alanine + H(+). It participates in amino-acid degradation; L-kynurenine degradation; L-alanine and anthranilate from L-kynurenine: step 1/1. The protein operates within cofactor biosynthesis; NAD(+) biosynthesis; quinolinate from L-kynurenine: step 2/3. In terms of biological role, catalyzes the cleavage of L-kynurenine (L-Kyn) and L-3-hydroxykynurenine (L-3OHKyn) into anthranilic acid (AA) and 3-hydroxyanthranilic acid (3-OHAA), respectively. This is Kynureninase 1 from Phaeosphaeria nodorum (strain SN15 / ATCC MYA-4574 / FGSC 10173) (Glume blotch fungus).